The primary structure comprises 152 residues: Venom protein family 1 protein 2 (152 aa).

The first 21 residues, 1 to 21, serve as a signal peptide directing secretion; it reads MAKLVFISFLVASFCLIGCFG. A disulfide bond links Cys70 and Cys150.

Belongs to the insect vpf1 family. Expressed by the venom gland (posterior main gland) (at protein level).

It localises to the secreted. This chain is Venom protein family 1 protein 2, found in Platymeris rhadamanthus (Red spot assassin bug).